Consider the following 156-residue polypeptide: Methylated-DNA--protein-cysteine methyltransferase (156 aa).

Residue Cys-126 is the Nucleophile; methyl group acceptor of the active site.

The protein belongs to the MGMT family.

The protein resides in the cytoplasm. The enzyme catalyses a 6-O-methyl-2'-deoxyguanosine in DNA + L-cysteinyl-[protein] = S-methyl-L-cysteinyl-[protein] + a 2'-deoxyguanosine in DNA. The catalysed reaction is a 4-O-methyl-thymidine in DNA + L-cysteinyl-[protein] = a thymidine in DNA + S-methyl-L-cysteinyl-[protein]. In terms of biological role, involved in the cellular defense against the biological effects of O6-methylguanine (O6-MeG) and O4-methylthymine (O4-MeT) in DNA. Repairs the methylated nucleobase in DNA by stoichiometrically transferring the methyl group to a cysteine residue in the enzyme. This is a suicide reaction: the enzyme is irreversibly inactivated. The chain is Methylated-DNA--protein-cysteine methyltransferase from Methanosarcina acetivorans (strain ATCC 35395 / DSM 2834 / JCM 12185 / C2A).